The following is a 448-amino-acid chain: Adenylosuccinate synthetase (448 aa).

GTP-binding positions include G22–K28 and G50–T52. The active-site Proton acceptor is the D23. Mg(2+) contacts are provided by D23 and G50. IMP is bound by residues D23–K26, N48–H51, T139, R153, Q234, T249, and R321. The Proton donor role is filled by H51. S317 to R323 contributes to the substrate binding site. GTP contacts are provided by residues R323, K349–D351, and S431–G433.

This sequence belongs to the adenylosuccinate synthetase family. In terms of assembly, homodimer. The cofactor is Mg(2+).

Its subcellular location is the cytoplasm. It carries out the reaction IMP + L-aspartate + GTP = N(6)-(1,2-dicarboxyethyl)-AMP + GDP + phosphate + 2 H(+). Its pathway is purine metabolism; AMP biosynthesis via de novo pathway; AMP from IMP: step 1/2. Plays an important role in the de novo pathway of purine nucleotide biosynthesis. Catalyzes the first committed step in the biosynthesis of AMP from IMP. The sequence is that of Adenylosuccinate synthetase from Burkholderia mallei (strain NCTC 10247).